Here is a 207-residue protein sequence, read N- to C-terminus: Outer-membrane lipoprotein LolB (207 aa).

The first 21 residues, 1 to 21 (MPLPDFRLIRLLPLAALVLTA), serve as a signal peptide directing secretion. The N-palmitoyl cysteine moiety is linked to residue cysteine 22. Cysteine 22 carries S-diacylglycerol cysteine lipidation.

It belongs to the LolB family. Monomer.

It localises to the cell outer membrane. Its function is as follows. Plays a critical role in the incorporation of lipoproteins in the outer membrane after they are released by the LolA protein. This Escherichia coli O7:K1 (strain IAI39 / ExPEC) protein is Outer-membrane lipoprotein LolB.